A 158-amino-acid polypeptide reads, in one-letter code: MSKTPLTVAGANKLKAELQKLKSEDRPRVIAAIAEAREHGDLKENAEYHAAREQQGFIEGRIKEIEAKLSNAQIIDVTTLNAGGKVVFGATVDLSDEETGKEVTYQIVGDDEADIKEGKISVNSPIARALIGKEEGDVVTVKAPGGDKDYEIVAVKYI.

Residues 53-73 are a coiled coil; sequence EQQGFIEGRIKEIEAKLSNAQ.

The protein belongs to the GreA/GreB family.

Necessary for efficient RNA polymerase transcription elongation past template-encoded arresting sites. The arresting sites in DNA have the property of trapping a certain fraction of elongating RNA polymerases that pass through, resulting in locked ternary complexes. Cleavage of the nascent transcript by cleavage factors such as GreA or GreB allows the resumption of elongation from the new 3'terminus. GreA releases sequences of 2 to 3 nucleotides. This is Transcription elongation factor GreA from Thioalkalivibrio sulfidiphilus (strain HL-EbGR7).